The following is a 136-amino-acid chain: Nodulation protein K (136 aa).

This is Nodulation protein K (nodK) from Bradyrhizobium sp. (strain ANU 289).